A 264-amino-acid chain; its full sequence is Thymidylate synthase (264 aa).

Arg21 serves as a coordination point for dUMP. His51 serves as a coordination point for (6R)-5,10-methylene-5,6,7,8-tetrahydrofolate. 126 to 127 serves as a coordination point for dUMP; it reads RR. Cys146 (nucleophile) is an active-site residue. DUMP is bound by residues 166-169, Asn177, and 207-209; these read RSAD and HIY. Residue Asp169 participates in (6R)-5,10-methylene-5,6,7,8-tetrahydrofolate binding. Ala263 serves as a coordination point for (6R)-5,10-methylene-5,6,7,8-tetrahydrofolate.

This sequence belongs to the thymidylate synthase family. Bacterial-type ThyA subfamily. In terms of assembly, homodimer.

It is found in the cytoplasm. The catalysed reaction is dUMP + (6R)-5,10-methylene-5,6,7,8-tetrahydrofolate = 7,8-dihydrofolate + dTMP. The protein operates within pyrimidine metabolism; dTTP biosynthesis. Its function is as follows. Catalyzes the reductive methylation of 2'-deoxyuridine-5'-monophosphate (dUMP) to 2'-deoxythymidine-5'-monophosphate (dTMP) while utilizing 5,10-methylenetetrahydrofolate (mTHF) as the methyl donor and reductant in the reaction, yielding dihydrofolate (DHF) as a by-product. This enzymatic reaction provides an intracellular de novo source of dTMP, an essential precursor for DNA biosynthesis. In Vesicomyosocius okutanii subsp. Calyptogena okutanii (strain HA), this protein is Thymidylate synthase.